The sequence spans 450 residues: Tubulin alpha chain (450 aa).

Q11 contributes to the GTP binding site. K40 is modified (N6-acetyllysine). GTP-binding residues include E71, G144, T145, T179, N206, and N228. E71 contributes to the Mg(2+) binding site. The active site involves E254.

Belongs to the tubulin family. Dimer of alpha and beta chains. A typical microtubule is a hollow water-filled tube with an outer diameter of 25 nm and an inner diameter of 15 nM. Alpha-beta heterodimers associate head-to-tail to form protofilaments running lengthwise along the microtubule wall with the beta-tubulin subunit facing the microtubule plus end conferring a structural polarity. Microtubules usually have 13 protofilaments but different protofilament numbers can be found in some organisms and specialized cells. Mg(2+) serves as cofactor. In terms of processing, undergoes a tyrosination/detyrosination cycle, the cyclic removal and re-addition of a C-terminal tyrosine residue by the enzymes tubulin tyrosine carboxypeptidase (TTCP) and tubulin tyrosine ligase (TTL), respectively. Acetylation of alpha chains at Lys-40 stabilizes microtubules and affects affinity and processivity of microtubule motors. This modification has a role in multiple cellular functions, ranging from cell motility, cell cycle progression or cell differentiation to intracellular trafficking and signaling.

The protein resides in the cytoplasm. The protein localises to the cytoskeleton. The enzyme catalyses GTP + H2O = GDP + phosphate + H(+). In terms of biological role, tubulin is the major constituent of microtubules, a cylinder consisting of laterally associated linear protofilaments composed of alpha- and beta-tubulin heterodimers. Microtubules grow by the addition of GTP-tubulin dimers to the microtubule end, where a stabilizing cap forms. Below the cap, tubulin dimers are in GDP-bound state, owing to GTPase activity of alpha-tubulin. The polypeptide is Tubulin alpha chain (TUBA) (Prunus dulcis (Almond)).